Reading from the N-terminus, the 72-residue chain is MIIPVRCFSCGRVIASDYGRYLRRINEIRSEGREPTAEEIEKIFDDLGVERYCCRRMIISHVDLINEIMPFS.

Zn(2+) contacts are provided by C7, C10, C53, and C54.

Belongs to the archaeal Rpo10/eukaryotic RPB10 RNA polymerase subunit family. Part of the RNA polymerase complex. The cofactor is Zn(2+).

The protein localises to the cytoplasm. The enzyme catalyses RNA(n) + a ribonucleoside 5'-triphosphate = RNA(n+1) + diphosphate. Functionally, DNA-dependent RNA polymerase (RNAP) catalyzes the transcription of DNA into RNA using the four ribonucleoside triphosphates as substrates. The polypeptide is DNA-directed RNA polymerase subunit Rpo10 (Thermoplasma volcanium (strain ATCC 51530 / DSM 4299 / JCM 9571 / NBRC 15438 / GSS1)).